The following is a 1793-amino-acid chain: MLSFHFWKSRGQPTDAASSVADGIQTPRCCRRCQANNWTGQLSYRTLATVSAGAAAPQPQTTSTASSRSLPTSLRLAAAPPQGLKNWEVVAAVAAVPTALGPVQIRGTLLRATLQPLRGQRRTQDFPSDHHCLFLSLKPGQGLIMEAAPPELNSKARQAEVGDGVSSAQDSQELKQQLWPLPKPSASSQREAKYVDMCASAEVQRESPQTMKLTLGHCPGGQRASRSPKEKAQDEPSSKTPSPQNNPASSQLSRSQHSASEEGGNFSSSSSSSPMNKAEEDGLSKMEDSTTSTGALATSSSSLGFESESGESEGCQAVGGEGEKISGGGGGGKGGGGGGAGDGTECRDIIAKSQGSRDPPKVEEAHYITTHEIQLSEVEQDMDFDVGLASRWDFEDNNVIYSFVDYASFGGSDETPGDITSLTEEDDDNSCYLSTTPSTNTTRTPSPTSSDLARPNAGRSGRDTSSTEVGSGPSDSGPTPPPTGPGTAPLTEPLPETPEAASGAAAAAASSCGSAASQILLSIKPASRAINEPSNVRAKQNIIYAAKHEGDMSLRVSTAAEHNSSSLKQNPAAAVAQDHAKKFIAVPARLQTRCGAIRAKELVDYSSGASSAVSELDDADKEVRNLTSRAFRSLAYPYFEALNISSRESSTTLSEVGFGRWSTFLDLKCGGVGARVEQSLLRSSAASVAAGLRKGSGARATADQLYIQSKKSQTKALEFVVSKVEGEIKHVETPLCFQKQVQTGSRVVTLLEPLNVRSESKASSAPGPGRATKGPGKGPGSAYTDDGSETSEGSKPTSRADGPQKSKFASSLLKNVISKKMQREHEFKMERGEVMDTSHHLSGTSKETEGARGSERQRERGLQRQSSRHSEAGSEYTVVSMSDAGGEGSVAGSKSPVFKASTPRERNAGPGRNFTDGHTEVCEIKKSASETVKGIFLRSQNSAFRSWKEKEAEKREEQAPIGKLKLPKGGDWRADLGEISASKNTIMSRLFVPNIQQTPKDKQPRKQATKYPAAQATSTAVIRPKAPEIKIRLGSVQQPSSDFNIAKLLTPKLAGGSASNLFKTIEDNSRAQQKLFRGDNLEKVPHFQVRDIRDKSKAQGPLHQVRDVRKLIKGSGDSSDKGSVTPEQGLTGPKPRQLSAAAGGSGSLSPMVITCQAVVNQREDSMDREPRESMGKGGGSRVLNSSSPEGTVLVHRASGRLPVATIAPNKPEQGSYLPVLKIVSKASTQKTPEKLKEEEVKEEGKATKPARNALEKLTAAVRSMEELYSFNRNEWKRKSDPLPMMMDSHVLSLIASEEREGVVVADGDHDKLSKRLGEVEERGTGNKAGVVLRGAPIERLQRRNSNPSAESVSARAAAFENLARERPRSLYIPPVHKDVERTQPLQPLPPLPSNRNVFTVSASSIQKTGGVAGKFPQGPSPESPSAAKGIKSQGLRSLKISPATRAPPDEVTNRKSGSNLEKSNSDCENYLTIPLKGSSAAGELLSRPGASREGPPNSSAATLCSLPPLSARSQVPSSSKGSQVSGTSRPAWRTKPDNPRETVAAPPGPQSPEHPPTTIYHQPPLPFTLQGAQPQVLCFSPPSMPAPAPAASAPVPTDPFQQAQPQQTQRKMLLDVTTGQYYLVDTPVQPMTRRLFDPETGQYVDVPMTSQQQAVAPMSISVPPLALSPGAYGPTYMIYPGFLPTVLPTNALQPTPIARAPRGSELSPMVAEPSSKEAAATFTEAPYFMASGQSPASSTSSAPAATSQLLGAKAFAQLHGKPVISITSQPLGPRIIAPPSFDGTTMSFVVEHR.

Disordered stretches follow at residues 156–189 (ARQA…ASSQ), 204–362 (QRES…PPKV), and 407–505 (ASFG…SGAA). Residues 166–175 (SSAQDSQELK) are compositionally biased toward polar residues. A compositionally biased stretch (basic and acidic residues) spans 227–237 (SPKEKAQDEPS). Polar residues predominate over residues 238-247 (SKTPSPQNNP). Residues 248-258 (ASSQLSRSQHS) are compositionally biased toward low complexity. The segment covering 277-288 (KAEEDGLSKMED) has biased composition (basic and acidic residues). Over residues 289–307 (STTSTGALATSSSSLGFES) the composition is skewed to low complexity. Positions 317–342 (AVGGEGEKISGGGGGGKGGGGGGAGD) are enriched in gly residues. Residues 434 to 450 (STTPSTNTTRTPSPTSS) are compositionally biased toward low complexity. Residues 463-476 (DTSSTEVGSGPSDS) are compositionally biased toward polar residues. The span at 485 to 505 (PGTAPLTEPLPETPEAASGAA) shows a compositional bias: low complexity. Thr733 bears the Phosphothreonine mark. Disordered stretches follow at residues 757-809 (RSES…SKFA), 829-917 (MERG…FTDG), 1090-1147 (RDIR…GSGS), 1161-1187 (QRED…NSSS), 1229-1249 (QKTP…ATKP), 1408-1465 (TGGV…KSNS), and 1482-1567 (GELL…PLPF). Basic and acidic residues-rich tracts occupy residues 829–839 (MERGEVMDTSH) and 846–872 (KETE…HSEA). Over residues 1113 to 1123 (KGSGDSSDKGS) the composition is skewed to low complexity. Over residues 1161 to 1174 (QREDSMDREPRESM) the composition is skewed to basic and acidic residues. Ser1187 bears the Phosphoserine mark. Residues 1231–1246 (TPEKLKEEEVKEEGKA) are compositionally biased toward basic and acidic residues. Low complexity predominate over residues 1513–1528 (SQVPSSSKGSQVSGTS). A compositionally biased stretch (pro residues) spans 1546-1555 (PPGPQSPEHP). Arg1774 is modified (omega-N-methylarginine).

As to expression, expressed in muscle, heart, kidney and liver but barely detectable in lung, pancreas and brain. In liver veins, expressed in hepatic vein, extrahepatic portal vein and intrahepatic portal vein.

This is an uncharacterized protein from Homo sapiens (Human).